The following is a 1447-amino-acid chain: METVYDFFAKPINPRRFSGVKIALASSEQILQWSFGEITKPETINYRTFRPERDGLFCAKIFGPTKDFECNCGKYKRMKHRGVTCEKCGVEVIQSKVRRERMAHIKLASPVSHIWFLKSLPSKIGNVLDLTLKELERVLYFDSYIVIDPKNTDLSPMQLLSEEAYQEARAKYGSDFEAAIGAEAIKALLDKVDLEVLSTQLREDLKATSVEAKRKKLAKRLRIVDAFAKSGVSPSWMIIEVVPVLPPDLRPLVPLEGGRFATSDLNDLYRRVINRNNRLKRLMELKAPDIIIRNEKRMLQEAVDVLFDNGRHGRAVTGSNKRPLKSLTDTLKGKQGRFRQNLLGKRVDYSGRTVITIGPNLRLHQCGLPKQMALELFKPFIYYRLEQKGYVSTVKSAKKMVEREVPEVWDTLEEVVKEYPVMLNRAPTLHRLGIQAFEPVLIEGKAIQLHPLVCTAFNADFDGDQMAVHIPLSVEAQIEARVLMLATNNILSPANGSPIIVPTQDIVLGTYYMTKTIEGTKGEGVVFSGPEEVVAAFDSGTVGLHAAISVRINGKLYDTSVGRVLVWEVIPQQIVPVFKTIHFSAKKEANSVLAEIKRGASFVDMQKKHGDESGVDYERAMKKEDMITEFGLSEADADYLFSLKEGECSDIIGISDGYRLFKLAGYRSEIPFEMVNRPLGKKAIRELVDGAYRNTGLKSTVILADRLKDIGYKYSTLGGLSISIDAMVVPEKKWDIIKAAEKKVEEIANQYKEGLITQGEKYNKVVDIWSKATDDIANEMMEAMRTDAGTPTGRFNPVFMMADSGARGSKDQMRQLAGMRGLMAKPSGEIIETPIVANFREGLSVLQYFISTHGARKGLADTALKTANSGYLTRRLADVAQDCIITEDDCGAMMGVEVEALVEGGEIIERLVDRVIGRIALEDIRDPFTDEVIVRGGEEISERHLSVIENSGLTKIWIRSVLTCKSETGICAKCYGRDFAHGKLVEHGQAVGILAAQSIGEPGTQLTMRTFHIGGTASRKVERAEIRARVDGFVRLGDLKLVENAEKKLVVMNRRGGEFTIVNKAGREVEKCPVIYGATIVVKDGQDIQAGDVLAAWDPFTTPIVAEVAGTVKFGDIVKGKTMQEMVDPVTGKSSQTIIDESRTHDVRPRISIKDDENKTATLPDGKSKARYPLPVGAVLLVEENDTIRAGDVIAKLPRATTKTKDITGGLPRVAELFEVRKPKEAAILSEINGYISIAKATTKKGKQKVTVAPVDGGEPREYLIPRGKHINVYDGDYIRAGEEIVAGSANPQDVMNIRGDVALARYLVDEVQEVYRLQGVTINDKHIEVIVRQMMRRVKIKEIGDTEFIDDEQVDRQRFEDTNREVIANGGKPAVGEPLILGITKASLATESFISAASFQETTKVLTDASIAGKTDYLRGLKENVIMGRLIPAGTGFVEYRKAAEK.

Positions 70, 72, 85, and 88 each coordinate Zn(2+). The Mg(2+) site is built by Asp460, Asp462, and Asp464. Cys890, Cys964, Cys971, and Cys974 together coordinate Zn(2+).

The protein belongs to the RNA polymerase beta' chain family. As to quaternary structure, the RNAP catalytic core consists of 2 alpha, 1 beta, 1 beta' and 1 omega subunit. When a sigma factor is associated with the core the holoenzyme is formed, which can initiate transcription. It depends on Mg(2+) as a cofactor. The cofactor is Zn(2+).

It carries out the reaction RNA(n) + a ribonucleoside 5'-triphosphate = RNA(n+1) + diphosphate. Functionally, DNA-dependent RNA polymerase catalyzes the transcription of DNA into RNA using the four ribonucleoside triphosphates as substrates. This chain is DNA-directed RNA polymerase subunit beta', found in Desulfosudis oleivorans (strain DSM 6200 / JCM 39069 / Hxd3) (Desulfococcus oleovorans).